A 96-amino-acid polypeptide reads, in one-letter code: NADH-ubiquinone oxidoreductase chain 4L (96 aa).

The next 3 membrane-spanning stretches (helical) occupy residues 1–21 (MNPT…AFYQ), 24–44 (LLSL…LMAI), and 57–77 (LPLI…VLLV).

Belongs to the complex I subunit 4L family.

The protein resides in the mitochondrion membrane. The enzyme catalyses a ubiquinone + NADH + 5 H(+)(in) = a ubiquinol + NAD(+) + 4 H(+)(out). Core subunit of the mitochondrial membrane respiratory chain NADH dehydrogenase (Complex I) which catalyzes electron transfer from NADH through the respiratory chain, using ubiquinone as an electron acceptor. Part of the enzyme membrane arm which is embedded in the lipid bilayer and involved in proton translocation. This chain is NADH-ubiquinone oxidoreductase chain 4L (MT-ND4L), found in Myxine glutinosa (Atlantic hagfish).